Here is a 1054-residue protein sequence, read N- to C-terminus: Trehalose synthase complex regulatory subunit TPS3 (1054 aa).

A disordered region spans residues 112 to 133 (AANSGIPPANNPVSSGSTAQRP). The segment covering 122–132 (NPVSSGSTAQR) has biased composition (polar residues). Residues S148, S150, and S181 each carry the phosphoserine modification. Disordered regions lie at residues 155-203 (ASSI…PVSK) and 223-250 (QQQASLPSMKRVSGSTAGDSSIASSSSN). The span at 170–182 (LSSSLMKNPNLSF) shows a compositional bias: polar residues. Low complexity predominate over residues 235-249 (SGSTAGDSSIASSSS). Phosphothreonine is present on T265. S267 and S273 each carry phosphoserine. A glycosyltransferase region spans residues 287–778 (KFGGYSNNAK…SNQETSTVFN (492 aa)). Phosphoserine is present on S960.

This sequence in the N-terminal section; belongs to the glycosyltransferase 20 family. As to quaternary structure, the trehalose synthase complex is composed of the two catalytic subunits TPS1 and TPS2 and at least one of the two regulatory subunits TPS3 or TSL1.

The protein localises to the cytoplasm. Functionally, regulatory subunit of the trehalose synthase complex that catalyzes the production of trehalose from glucose-6-phosphate and UDP-glucose in a two step process. May stabilize the trehalose synthase complex. The chain is Trehalose synthase complex regulatory subunit TPS3 (TPS3) from Saccharomyces cerevisiae (strain ATCC 204508 / S288c) (Baker's yeast).